The following is a 988-amino-acid chain: Transcriptional regulator of yeast form adherence 5 (988 aa).

C2H2-type zinc fingers lie at residues 7-29 (YICAFCARAFTRSEHKQRHERSH) and 35-59 (FHCLHCTSSFVRRDLLQRHCRTVHH). Over residues 59-83 (HTNLNPSTLPSNKSLKNPTTNPLDL) the composition is skewed to polar residues. Disordered regions lie at residues 59–129 (HTNL…SSVG) and 174–229 (SMES…SNNN). Low complexity predominate over residues 84 to 106 (SNNEGTTTTTKTGNRKNNSNKNG). Composition is skewed to polar residues over residues 113 to 129 (TNPNPAVSNDDNRSSVG) and 174 to 208 (SMESDQHSLTTFDSPTSSLGVSMTPSGSTNSEIVL).

Its subcellular location is the nucleus. Transcription factor required for yeast cell adherence to silicone substrate. This chain is Transcriptional regulator of yeast form adherence 5 (TRY5), found in Candida albicans (strain SC5314 / ATCC MYA-2876) (Yeast).